The following is a 905-amino-acid chain: A disintegrin and metalloproteinase with thrombospondin motifs 8 (905 aa).

The first 28 residues, 1-28 (MLRDPTTTGWPPLLLLLLQLPPPPLVCG), serve as a signal peptide directing secretion. The propeptide occupies 29–228 (APAGPGTGAQ…PFGSKTRSKR (200 aa)). Disordered regions lie at residues 139–163 (PQGA…RRED) and 186–225 (NGQG…SKTR). Positions 191–215 (ERSDNEEDRKQDKEGLLKETEDSRK) are enriched in basic and acidic residues. Residues 234 to 444 (RFVETLLVAD…GHGDCLLDAP (211 aa)) enclose the Peptidase M12B domain. Intrachain disulfides connect C309–C362, C338–C344, C356–C439, C394–C423, C478–C502, C487–C523, C517–C528, C554–C591, C558–C596, and C569–C581. H378 is a Zn(2+) binding site. E379 is an active-site residue. Zn(2+)-binding residues include H382 and H388. 3 N-linked (GlcNAc...) asparagine glycosylation sites follow: N415, N480, and N506. Residues 453–541 (GLPGHSTLYE…EDVENPKAVV (89 aa)) form the Disintegrin domain. The region spanning 542-597 (DGDWGPWRPWGQCSRTCGGGIQFSNRECDNPMPQNGGRFCLGERVKYQSCNTEECP) is the TSP type-1 1 domain. N-linked (GlcNAc...) asparagine glycosylation occurs at N615. Residues 706-847 (RKISGSFTPF…RATTNIIQSL (142 aa)) are spacer. The 57-residue stretch at 848-904 (PSAEWVLGDWSECPSTCRGSWQRRTVECRDPSGQASDTCDEALKPEDAKPCGSQPCP) folds into the TSP type-1 2 domain. A disordered region spans residues 877-905 (DPSGQASDTCDEALKPEDAKPCGSQPCPL).

Zn(2+) is required as a cofactor. In terms of processing, the precursor is cleaved by a furin endopeptidase. Post-translationally, glycosylated. Can be O-fucosylated by POFUT2 on a serine or a threonine residue found within the consensus sequence C1-X(2)-(S/T)-C2-G of the TSP type-1 repeat domains where C1 and C2 are the first and second cysteine residue of the repeat, respectively. Fucosylated repeats can then be further glycosylated by the addition of a beta-1,3-glucose residue by the glucosyltransferase, B3GALTL. Fucosylation mediates the efficient secretion of ADAMTS family members. Can also be C-glycosylated with one or two mannose molecules on tryptophan residues within the consensus sequence W-X-X-W of the TPRs, and N-glycosylated. These other glycosylations can also facilitate secretion. In terms of tissue distribution, expressed specifically in adult lung and heart and low expression during mouse development.

The protein resides in the secreted. It localises to the extracellular space. Its subcellular location is the extracellular matrix. Functionally, has anti-angiogenic properties. This is A disintegrin and metalloproteinase with thrombospondin motifs 8 (Adamts8) from Mus musculus (Mouse).